The following is a 160-amino-acid chain: Endoribonuclease YbeY (160 aa).

Residues histidine 112, histidine 116, and histidine 122 each coordinate Zn(2+). The interval 141–160 (ELGHPDPYACDDEEPPSKEK) is disordered.

Belongs to the endoribonuclease YbeY family. The cofactor is Zn(2+).

The protein resides in the cytoplasm. In terms of biological role, single strand-specific metallo-endoribonuclease involved in late-stage 70S ribosome quality control and in maturation of the 3' terminus of the 16S rRNA. The chain is Endoribonuclease YbeY from Pseudomonas aeruginosa (strain UCBPP-PA14).